A 1194-amino-acid polypeptide reads, in one-letter code: Metabotropic glutamate receptor 1 (1194 aa).

Residues 1-18 (MVGLLLFFFPAIFLEVSL) form the signal peptide. Over 19-592 (LPRSPGRKVL…VRYLEWSNIE (574 aa)) the chain is Extracellular. C67 and C109 form a disulfide bridge. Residue Y74 coordinates L-glutamate. N-linked (GlcNAc...) asparagine glycosylation is present at N98. L-glutamate is bound by residues S165 and 186–188 (SAT). N-linked (GlcNAc...) asparagine glycosylation is present at N223. Y236 contributes to the L-glutamate binding site. C289 and C291 are oxidised to a cystine. L-glutamate is bound at residue D318. An intrachain disulfide couples C378 to C394. N397 is a glycosylation site (N-linked (GlcNAc...) asparagine). An L-glutamate-binding site is contributed by K409. C432 and C439 are oxidised to a cystine. Residue N515 is glycosylated (N-linked (GlcNAc...) asparagine). The chain crosses the membrane as a helical span at residues 593–615 (SIIAIAFSCLGILVTLFVTLIFV). Residues 616–629 (LYRDTPVVKSSSRE) lie on the Cytoplasmic side of the membrane. A helical transmembrane segment spans residues 630-650 (LCYIILAGIFLGYVCPFTLIA). Over 651–658 (KPTTTSCY) the chain is Extracellular. Cysteines 657 and 746 form a disulfide. Residues 659–680 (LQRLLVGLSSAMCYSALVTKTN) form a helical membrane-spanning segment. Residues 681–703 (RIARILAGSKKKICTRKPRFMSA) are Cytoplasmic-facing. Residues 704–727 (WAQVIIASILISVQLTLVVTLIIM) traverse the membrane as a helical segment. Over 728-750 (EPPMPILSYPSIKEVYLICNTSN) the chain is Extracellular. Residues 751-772 (LGVVAPLGYNGLLIMSCTYYAF) form a helical membrane-spanning segment. Over 773-785 (KTRNVPANFNEAK) the chain is Cytoplasmic. The helical transmembrane segment at 786 to 807 (YIAFTMYTTCIIWLAFVPIYFG) threads the bilayer. The Extracellular segment spans residues 808 to 815 (SNYKIITT). The chain crosses the membrane as a helical span at residues 816–840 (CFAVSLSVTVALGCMFTPKMYIIIA). Over 841 to 1194 (KPERNVRSAF…RDYKQSSSTL (354 aa)) the chain is Cytoplasmic. At S853 the chain carries Phosphoserine. T871 is subject to Phosphothreonine. Residues 883–905 (AGNANSNGKSVSWSEPGGGQVPK) form a disordered region. The segment covering 885-895 (NANSNGKSVSW) has biased composition (polar residues). A phosphoserine mark is found at S894 and S969. The interval 1007 to 1030 (PALPKGLPPPLQQQQQPPPQQKSL) is disordered. The span at 1012-1026 (GLPPPLQQQQQPPPQ) shows a compositional bias: pro residues. S1091 carries the post-translational modification Phosphoserine. The interval 1113-1173 (HEREGNTEED…SPVSESVLCT (61 aa)) is disordered. A compositionally biased stretch (acidic residues) spans 1119-1131 (TEEDELEEEEEDL). S1142 is subject to Phosphoserine. The residue at position 1146 (T1146) is a Phosphothreonine. Position 1149 is a phosphoserine (S1149). The span at 1154–1170 (SVASGSSVPSSPVSESV) shows a compositional bias: low complexity.

Belongs to the G-protein coupled receptor 3 family. Homodimer; disulfide-linked. The PPXXF motif binds HOMER1, HOMER2 and HOMER3. Interacts with TAMALIN. Interacts with RYR1, RYR2, ITPR1, SHANK1 and SHANK3. Interacts with SIAH1. As to expression, detected in brain.

It localises to the cell membrane. The protein localises to the postsynaptic cell membrane. The protein resides in the cell projection. It is found in the dendrite. Signaling is inhibited by the antagonist LY341495. The LY341495 binding site partially overlaps with the glutamate binding site. Signaling is also inhibited by synthetic allosteric regulators, such as FITM (4-fluoro-N-(4-(6-(isopropylamino)pyrimidin-4-yl)thiazol-2-yl)-N-methylbenzamide) that bind in a pocket between the transmembrane helices. Its function is as follows. G-protein coupled receptor for glutamate. Ligand binding causes a conformation change that triggers signaling via guanine nucleotide-binding proteins (G proteins) and modulates the activity of down-stream effectors. Signaling activates a phosphatidylinositol-calcium second messenger system. May participate in the central action of glutamate in the CNS, such as long-term potentiation in the hippocampus and long-term depression in the cerebellum. May function in the light response in the retina. Induces GRID1 and GRID2 cation-channel activation via GNAQ-PLC-PKC pathway in dopaminergic neurons and cerebellar Purkinje cell, respectively. The polypeptide is Metabotropic glutamate receptor 1 (GRM1) (Homo sapiens (Human)).